A 213-amino-acid chain; its full sequence is ATP-dependent dethiobiotin synthetase BioD (213 aa).

13 to 18 lines the ATP pocket; the sequence is GIGKTV. T17 is a binding site for Mg(2+). K33 is a catalytic residue. E100 serves as a coordination point for Mg(2+). ATP-binding positions include 100–103 and 184–186; these read EGAG and PHL.

Belongs to the dethiobiotin synthetase family. Homodimer. The cofactor is Mg(2+).

It localises to the cytoplasm. It catalyses the reaction (7R,8S)-7,8-diammoniononanoate + CO2 + ATP = (4R,5S)-dethiobiotin + ADP + phosphate + 3 H(+). The protein operates within cofactor biosynthesis; biotin biosynthesis; biotin from 7,8-diaminononanoate: step 1/2. Catalyzes a mechanistically unusual reaction, the ATP-dependent insertion of CO2 between the N7 and N8 nitrogen atoms of 7,8-diaminopelargonic acid (DAPA, also called 7,8-diammoniononanoate) to form a ureido ring. This chain is ATP-dependent dethiobiotin synthetase BioD, found in Rhodopseudomonas palustris (strain BisA53).